Reading from the N-terminus, the 214-residue chain is Ribonuclease HII (214 aa).

The region spanning 18–208 (SRVVGVDEVG…SLLPSEAHLC (191 aa)) is the RNase H type-2 domain. 3 residues coordinate a divalent metal cation: Asp24, Glu25, and Asp116.

This sequence belongs to the RNase HII family. Requires Mn(2+) as cofactor. Mg(2+) serves as cofactor.

The protein localises to the cytoplasm. It catalyses the reaction Endonucleolytic cleavage to 5'-phosphomonoester.. In terms of biological role, endonuclease that specifically degrades the RNA of RNA-DNA hybrids. This Thermosynechococcus vestitus (strain NIES-2133 / IAM M-273 / BP-1) protein is Ribonuclease HII.